The primary structure comprises 295 residues: MTSFMSRVWCKVESTGRQLPIVLNAVLVFSITAEVSYLVLVEAPFEPEQKKTDWSTIWTGLHLFAQYFMLGNITWNASLFVKTNPSIRGVFLGGDTLGQGWRYCYNCETHTPPRCSHCYDCNVCVLRRDHHCVFFGQCVGFHNYRYFLTCLLFMWAGLLYAVVMNAEVFIFILKEGVTFHSVMLLLVPWIMLVSGQVTTRAFAFAFIADTCVVGFLLVAAFLFFHVALMLRGQTTREWYSTRRPYSLGTMANIRECLGKNWYFCWLCPLIPSPLPGDGINFKVTASLEPKKQAVH.

Residues M1–P20 lie on the Cytoplasmic side of the membrane. The helical transmembrane segment at I21–V41 threads the bilayer. The Extracellular portion of the chain corresponds to E42–G60. A helical membrane pass occupies residues L61–V81. At K82 to L151 the chain is on the cytoplasmic side. In terms of domain architecture, DHHC spans R102 to L152. Residue C132 is the S-palmitoyl cysteine intermediate of the active site. A helical transmembrane segment spans residues L152–I172. Residues L173 to G176 lie on the Extracellular side of the membrane. The chain crosses the membrane as a helical span at residues V177–V197. At T198 to A203 the chain is on the cytoplasmic side. The helical transmembrane segment at F204–F224 threads the bilayer. The Extracellular segment spans residues H225 to H295.

The protein belongs to the DHHC palmitoyltransferase family.

It is found in the membrane. It catalyses the reaction L-cysteinyl-[protein] + hexadecanoyl-CoA = S-hexadecanoyl-L-cysteinyl-[protein] + CoA. In terms of biological role, probable palmitoyltransferase that could catalyze the addition of palmitate onto various protein substrates. The sequence is that of Probable palmitoyltransferase ZDHHC24 from Danio rerio (Zebrafish).